The primary structure comprises 436 residues: MTTGFFGDVSKITFEGADSTNPLAFRHYNPDEVILGKRMEEHLRFATCYWHNFVWPGGDPFGGQTFDRPWFKDTMHAAKLKADVAFEMFTLLQSPYYCFHDADVRPEGANFAENTRNLNEIVDYFAQKQEETGVKLLWGTANLFSNARYMSGASTNPDPDVFAFSAATIKTCMDATHRLGGENYVLWGGREGYETLLNTDLAQEDQQMGRMLNMVVEYKHKIGFKGAILVEPKPQEPSKHQYDYDAATVYGFLKRHGLENEVKLNLEQGHAILAGHSFEHEIATAQALGIFGSIDMNRNDYQSGWDTDQFPNNTPEVALAYYHILKHGGFTTGGTNFDAKLRRQSIDAEDLLMAHIGGMDICARGFKAAAAMIEDGTLDQFVTDRYAGWQTDPAQDMLAGKLSLDEIAKRVEAEDINPKPRSGRQEYLENLINRFV.

Catalysis depends on residues His100 and Asp103. The Mg(2+) site is built by Glu231, Glu267, His270, Asp295, Asp306, Asp308, and Asp338.

This sequence belongs to the xylose isomerase family. Homotetramer. Mg(2+) is required as a cofactor.

The protein resides in the cytoplasm. The catalysed reaction is alpha-D-xylose = alpha-D-xylulofuranose. The sequence is that of Xylose isomerase from Ruegeria sp. (strain TM1040) (Silicibacter sp.).